We begin with the raw amino-acid sequence, 370 residues long: tRNA-specific 2-thiouridylase MnmA (370 aa).

ATP contacts are provided by residues 11–18 and Met37; that span reads GMSGGVDS. The segment at 97–99 is interaction with target base in tRNA; it reads NPD. Catalysis depends on Cys102, which acts as the Nucleophile. The cysteines at positions 102 and 199 are disulfide-linked. Gly126 contributes to the ATP binding site. The interaction with tRNA stretch occupies residues 149–151; the sequence is KDQ. Cys199 functions as the Cysteine persulfide intermediate in the catalytic mechanism. Residues 307 to 308 form an interaction with tRNA region; it reads RY.

It belongs to the MnmA/TRMU family.

It localises to the cytoplasm. It catalyses the reaction S-sulfanyl-L-cysteinyl-[protein] + uridine(34) in tRNA + AH2 + ATP = 2-thiouridine(34) in tRNA + L-cysteinyl-[protein] + A + AMP + diphosphate + H(+). Its function is as follows. Catalyzes the 2-thiolation of uridine at the wobble position (U34) of tRNA, leading to the formation of s(2)U34. This is tRNA-specific 2-thiouridylase MnmA from Staphylococcus haemolyticus (strain JCSC1435).